A 167-amino-acid chain; its full sequence is V-type proton ATPase subunit c' (167 aa).

The Lumenal segment spans residues 1 to 13 (MAEIMADSELAPK). A helical transmembrane segment spans residues 14–34 (FAPFIGMAGIAAAMIFGSAGA). Residues 35 to 59 (AYGTAKSGIGIAGVGTFRPDLIMKC) lie on the Cytoplasmic side of the membrane. A helical membrane pass occupies residues 60-80 (LIPVVMSGIIAVYALVVAVLI). The Lumenal portion of the chain corresponds to 81–101 (AQDLGPPGSGQHYSLFNGFMH). Residues 102–122 (LACGLSVGLTGLAAGYCIGIV) traverse the membrane as a helical segment. At 123-140 (GDKGVRSFMLQSRIFVGM) the chain is on the cytoplasmic side. The chain crosses the membrane as a helical span at residues 141–161 (VLILIFGEVLGLYGLIVALIL). The Lumenal segment spans residues 162-167 (NTKSKG).

It belongs to the V-ATPase proteolipid subunit family. V-ATPase is a heteromultimeric enzyme composed of a peripheral catalytic V1 complex (components A to H) attached to an integral membrane V0 proton pore complex (components: a, c, c', c'', d, e, f and VOA1). The decameric c-ring forms the proton-conducting pore, and is composed of eight proteolipid subunits c, one subunit c' and one subunit c''.

The protein localises to the vacuole membrane. Its function is as follows. Proton-conducting pore forming subunit of the V0 complex of vacuolar(H+)-ATPase (V-ATPase), a multisubunit enzyme composed of a peripheral complex (V1) that hydrolyzes ATP and a membrane integral complex (V0) that translocates protons. V-ATPase is responsible for acidifying and maintaining the pH of intracellular compartments. This Neurospora crassa (strain ATCC 24698 / 74-OR23-1A / CBS 708.71 / DSM 1257 / FGSC 987) protein is V-type proton ATPase subunit c' (vma-11).